The primary structure comprises 421 residues: AVAAESSTGTWTTVWTDGLTSLDRYKGRCYHIEPVAGEDNQWICYVAYPLDLFEEGSVTNMFTSIVGNVFGFKALRALRLEDLRIPPTYSKTFQGPPHGIQVERDKLNKYGRPLLGCTIKPKLGLSAKNYGRACYECLRGGLDFTKDDENVNSQPFMRWRDRFVFCAEAIYKSQAETGEIKGHYLNATAGTCEEMIKRAVFARELGVPIVMHDYLTGGFTANTTLRHYCRDNGLLLHIHRAMHAVIDRQKNHGMHFRVLAKALRMSGGDHIHSGTVVGKLEGEREMTLGFVDLLRDDFIEKDRARGIFFTQDWVSMPGVIPVASGGIHVWHMPALTEIFGDDSVLQFGGGTLGHPWGNAPGAAANRVALEACVQARNEGRDLAREGNEIIRAACKWSPELAAACEVWKAIKFEFEPVDTID.

Substrate is bound by residues Asn68 and Thr118. Lys120 acts as the Proton acceptor in catalysis. Residue Lys122 participates in substrate binding. The Mg(2+) site is built by Lys146, Asp148, and Glu149. Lys146 is modified (N6-carboxylysine). Residue His239 is the Proton acceptor of the active site. Substrate-binding residues include Arg240, His272, and Ser324.

This sequence belongs to the RuBisCO large chain family. Type I subfamily. As to quaternary structure, heterohexadecamer of 8 large chains and 8 small chains; disulfide-linked. The disulfide link is formed within the large subunit homodimers. Requires Mg(2+) as cofactor. The disulfide bond which can form in the large chain dimeric partners within the hexadecamer appears to be associated with oxidative stress and protein turnover.

It is found in the plastid. It localises to the chloroplast. The catalysed reaction is 2 (2R)-3-phosphoglycerate + 2 H(+) = D-ribulose 1,5-bisphosphate + CO2 + H2O. It catalyses the reaction D-ribulose 1,5-bisphosphate + O2 = 2-phosphoglycolate + (2R)-3-phosphoglycerate + 2 H(+). RuBisCO catalyzes two reactions: the carboxylation of D-ribulose 1,5-bisphosphate, the primary event in carbon dioxide fixation, as well as the oxidative fragmentation of the pentose substrate in the photorespiration process. Both reactions occur simultaneously and in competition at the same active site. The sequence is that of Ribulose bisphosphate carboxylase large chain (rbcL) from Aegilops crassa (Persian goatgrass).